A 957-amino-acid polypeptide reads, in one-letter code: Receptor-like protein 53 (957 aa).

An N-terminal signal peptide occupies residues 1–30; it reads MEGFWNSKSIIRITLSFIFLFICHFLDVLA. The Extracellular segment spans residues 31–910; the sequence is APTRNLCRPE…EEEDEDLISW (880 aa). Asn78, Asn114, Asn143, Asn167, and Asn191 each carry an N-linked (GlcNAc...) asparagine glycan. LRR repeat units follow at residues 120–143, 144–170, 172–192, 193–216, 217–240, 241–266, 268–287, 288–312, 313–336, 338–360, 361–384, and 386–409; these read LHFL…SIEN, LSHL…NLSR, TYLN…ICNL, SHLT…IGGL, SHLT…IGNL, SNLT…NLSQ, TFLG…SFGN, LNQL…LLNL, TGLS…ITSL, NLMD…LFTI, PSLT…NISS, and SNLY…ISKL. 4 N-linked (GlcNAc...) asparagine glycosylation sites follow: Asn239, Asn242, Asn252, and Asn263. N-linked (GlcNAc...) asparagine glycans are attached at residues Asn311 and Asn332. Residue Asn381 is glycosylated (N-linked (GlcNAc...) asparagine). The LRR 13; degenerate repeat unit spans residues 412–433; the sequence is LFRLDISHLNTQGPVDFSIFSH. LRR repeat units lie at residues 434–458, 460–483, 486–509, 510–533, 535–556, 558–580, 581–604, 605–629, 631–651, 652–674, 675–697, 698–721, 765–789, 790–813, 814–837, and 839–862; these read LKSL…YFLS, FKRL…SVSD, SQLI…VRTQ, HELG…LWRL, ILYY…SKPE, SLLY…ICGL, RSLN…MGHL, KSTL…IFEI, RSLD…LSFF, STLE…WLSS, LPKL…EATF, PELR…YFVK, LTIY…IGLL, KELL…MGNL, TALE…LGDL, and FLAY…QFLT. 3 N-linked (GlcNAc...) asparagine glycosylation sites follow: Asn441, Asn446, and Asn477. N-linked (GlcNAc...) asparagine glycosylation is found at Asn540 and Asn543. Residue Asn594 is glycosylated (N-linked (GlcNAc...) asparagine). An N-linked (GlcNAc...) asparagine glycan is attached at Asn665. N-linked (GlcNAc...) asparagine glycosylation is present at Asn711. An N-linked (GlcNAc...) asparagine glycan is attached at Asn812. Asn844 and Asn864 each carry an N-linked (GlcNAc...) asparagine glycan. The helical transmembrane segment at 911–931 threads the bilayer; it reads IAAAIGFGPGIAFGLMFGYIL. Topologically, residues 932–957 are cytoplasmic; the sequence is VSYKPEWFMNPFDRNNRRQKRHKTTH.

The protein belongs to the RLP family.

The protein localises to the cell membrane. This chain is Receptor-like protein 53, found in Arabidopsis thaliana (Mouse-ear cress).